Reading from the N-terminus, the 140-residue chain is Small ribosomal subunit protein uS12 (140 aa).

Pro59 bears the Hydroxyproline mark.

It belongs to the universal ribosomal protein uS12 family.

In Encephalitozoon cuniculi (strain GB-M1) (Microsporidian parasite), this protein is Small ribosomal subunit protein uS12 (RPS23).